The sequence spans 61 residues: uncharacterized protein (61 aa).

Residues 10 to 27 (RILFFFFIFFTLFLFNIP) form a helical membrane-spanning segment.

The protein resides in the membrane. This is an uncharacterized protein from Dictyostelium discoideum (Social amoeba).